A 99-amino-acid chain; its full sequence is Plastocyanin (99 aa).

The region spanning 1–99 is the Plastocyanin-like domain; sequence IEIKLGGDDG…AGMVGKVTVQ (99 aa). H37, C84, H87, and M92 together coordinate Cu cation.

Belongs to the plastocyanin family. The cofactor is Cu(2+).

It is found in the plastid. Its subcellular location is the chloroplast thylakoid membrane. Functionally, participates in electron transfer between P700 and the cytochrome b6-f complex in photosystem I. In Rumex obtusifolius (Bitter dock), this protein is Plastocyanin (PETE).